We begin with the raw amino-acid sequence, 288 residues long: ATP synthase gamma chain (288 aa).

The protein belongs to the ATPase gamma chain family. As to quaternary structure, F-type ATPases have 2 components, CF(1) - the catalytic core - and CF(0) - the membrane proton channel. CF(1) has five subunits: alpha(3), beta(3), gamma(1), delta(1), epsilon(1). CF(0) has three main subunits: a, b and c.

The protein resides in the cell inner membrane. In terms of biological role, produces ATP from ADP in the presence of a proton gradient across the membrane. The gamma chain is believed to be important in regulating ATPase activity and the flow of protons through the CF(0) complex. This chain is ATP synthase gamma chain, found in Acidovorax ebreus (strain TPSY) (Diaphorobacter sp. (strain TPSY)).